Here is a 643-residue protein sequence, read N- to C-terminus: Threonine--tRNA ligase (643 aa).

The TGS domain maps to 1 to 61 (MVAISLPDGS…TTDASVSLIT (61 aa)). A catalytic region spans residues 243–534 (DHRRVGQEMD…LIENCAGRFP (292 aa)). C334, H385, and H511 together coordinate Zn(2+).

Belongs to the class-II aminoacyl-tRNA synthetase family. In terms of assembly, homodimer. Zn(2+) serves as cofactor.

The protein localises to the cytoplasm. It carries out the reaction tRNA(Thr) + L-threonine + ATP = L-threonyl-tRNA(Thr) + AMP + diphosphate + H(+). Its function is as follows. Catalyzes the attachment of threonine to tRNA(Thr) in a two-step reaction: L-threonine is first activated by ATP to form Thr-AMP and then transferred to the acceptor end of tRNA(Thr). Also edits incorrectly charged L-seryl-tRNA(Thr). The sequence is that of Threonine--tRNA ligase from Rhodospirillum rubrum (strain ATCC 11170 / ATH 1.1.1 / DSM 467 / LMG 4362 / NCIMB 8255 / S1).